A 209-amino-acid polypeptide reads, in one-letter code: Thiamine-phosphate synthase (209 aa).

Residues 41-45 (QYRNK) and Asn-73 each bind 4-amino-2-methyl-5-(diphosphooxymethyl)pyrimidine. Mg(2+)-binding residues include Asp-74 and Asp-93. Position 112 (Ser-112) interacts with 4-amino-2-methyl-5-(diphosphooxymethyl)pyrimidine. Residue 139-141 (SST) participates in 2-[(2R,5Z)-2-carboxy-4-methylthiazol-5(2H)-ylidene]ethyl phosphate binding. 4-amino-2-methyl-5-(diphosphooxymethyl)pyrimidine is bound at residue Lys-142. Gly-168 is a binding site for 2-[(2R,5Z)-2-carboxy-4-methylthiazol-5(2H)-ylidene]ethyl phosphate.

This sequence belongs to the thiamine-phosphate synthase family. Requires Mg(2+) as cofactor.

The catalysed reaction is 2-[(2R,5Z)-2-carboxy-4-methylthiazol-5(2H)-ylidene]ethyl phosphate + 4-amino-2-methyl-5-(diphosphooxymethyl)pyrimidine + 2 H(+) = thiamine phosphate + CO2 + diphosphate. It catalyses the reaction 2-(2-carboxy-4-methylthiazol-5-yl)ethyl phosphate + 4-amino-2-methyl-5-(diphosphooxymethyl)pyrimidine + 2 H(+) = thiamine phosphate + CO2 + diphosphate. The enzyme catalyses 4-methyl-5-(2-phosphooxyethyl)-thiazole + 4-amino-2-methyl-5-(diphosphooxymethyl)pyrimidine + H(+) = thiamine phosphate + diphosphate. It functions in the pathway cofactor biosynthesis; thiamine diphosphate biosynthesis; thiamine phosphate from 4-amino-2-methyl-5-diphosphomethylpyrimidine and 4-methyl-5-(2-phosphoethyl)-thiazole: step 1/1. Its function is as follows. Condenses 4-methyl-5-(beta-hydroxyethyl)thiazole monophosphate (THZ-P) and 2-methyl-4-amino-5-hydroxymethyl pyrimidine pyrophosphate (HMP-PP) to form thiamine monophosphate (TMP). This is Thiamine-phosphate synthase from Methylobacillus flagellatus (strain ATCC 51484 / DSM 6875 / VKM B-1610 / KT).